Consider the following 447-residue polypeptide: Methylenetetrahydrofolate--tRNA-(uracil-5-)-methyltransferase TrmFO (447 aa).

Residue 10-15 coordinates FAD; the sequence is GAGLAG.

This sequence belongs to the MnmG family. TrmFO subfamily. FAD is required as a cofactor.

The protein resides in the cytoplasm. It carries out the reaction uridine(54) in tRNA + (6R)-5,10-methylene-5,6,7,8-tetrahydrofolate + NADH + H(+) = 5-methyluridine(54) in tRNA + (6S)-5,6,7,8-tetrahydrofolate + NAD(+). It catalyses the reaction uridine(54) in tRNA + (6R)-5,10-methylene-5,6,7,8-tetrahydrofolate + NADPH + H(+) = 5-methyluridine(54) in tRNA + (6S)-5,6,7,8-tetrahydrofolate + NADP(+). Catalyzes the folate-dependent formation of 5-methyl-uridine at position 54 (M-5-U54) in all tRNAs. The protein is Methylenetetrahydrofolate--tRNA-(uracil-5-)-methyltransferase TrmFO of Lactococcus lactis subsp. lactis (strain IL1403) (Streptococcus lactis).